A 455-amino-acid polypeptide reads, in one-letter code: EP1-like glycoprotein 1 (455 aa).

The signal sequence occupies residues Met1–Ala22. One can recognise a Bulb-type lectin domain in the interval Thr43–Asp163. N-linked (GlcNAc...) asparagine glycosylation is found at Asn106, Asn191, Asn211, Asn241, and Asn289. Cys374 is modified (S-nitrosocysteine). One can recognise a PAN domain in the interval Cys374–Tyr455. 2 cysteine pairs are disulfide-bonded: Cys410-Cys432 and Cys414-Cys420. Residue Asn446 is glycosylated (N-linked (GlcNAc...) asparagine).

The protein localises to the secreted. Its subcellular location is the cell wall. The protein is EP1-like glycoprotein 1 of Arabidopsis thaliana (Mouse-ear cress).